We begin with the raw amino-acid sequence, 371 residues long: MSFRKVHIAIILLAAVVFLLILHHNILGLTDILTRQSSDSAPLVFQRLEALRDAHESPPEERQGEEIAVVIPGVEERLGGLVAAINSISSNTKSNVVFYIITTNDTKGHIRSWLDGTGLKRVTYKLLAFDTRVLDGKVRVDAGAEPVKPMTFARFYLPNLLPETKKAIYLDDDVIVQDDIRDLYNTPLRPGHAAAFSDDCDSVTSKFPVRGAANQYNYIGFLDYKKERIRSLGMRANTCSFNPGVFVANLTEWRRQNVTRQLEKWMELDVAEELYSKTLSASITAPPLLIVFYQRHSNLDPLWHVRHLGSSSGKRYSPQFVKAAKLLHWNGHFKPWGRTSSYPEVWEKWFIPDPMGQFAPIRRHGEADGTK.

Topologically, residues Met-1–His-7 are cytoplasmic. Residues Ile-8–Gly-28 traverse the membrane as a helical; Signal-anchor for type II membrane protein segment. Topologically, residues Leu-29–Lys-371 are lumenal. N-linked (GlcNAc...) asparagine glycans are attached at residues Asn-104, Asn-249, and Asn-257.

The protein belongs to the glycosyltransferase 8 family.

It is found in the membrane. The sequence is that of Glycosyltransferase 8 domain-containing protein 1 (glt8d1) from Xenopus tropicalis (Western clawed frog).